Reading from the N-terminus, the 462-residue chain is Glutamate--tRNA ligase (462 aa).

A 'HIGH' region motif is present at residues 11 to 21; it reads PSPTGFIHLGN. The 'KMSKS' region signature appears at 243 to 247; it reads KMSKR. Lys246 is a binding site for ATP.

This sequence belongs to the class-I aminoacyl-tRNA synthetase family. Glutamate--tRNA ligase type 1 subfamily. As to quaternary structure, monomer.

Its subcellular location is the cytoplasm. It catalyses the reaction tRNA(Glu) + L-glutamate + ATP = L-glutamyl-tRNA(Glu) + AMP + diphosphate. In terms of biological role, catalyzes the attachment of glutamate to tRNA(Glu) in a two-step reaction: glutamate is first activated by ATP to form Glu-AMP and then transferred to the acceptor end of tRNA(Glu). The chain is Glutamate--tRNA ligase from Albidiferax ferrireducens (strain ATCC BAA-621 / DSM 15236 / T118) (Rhodoferax ferrireducens).